Here is a 397-residue protein sequence, read N- to C-terminus: Probable N-succinyldiaminopimelate aminotransferase DapC (397 aa).

Pyridoxal 5'-phosphate-binding positions include 109–110 (GS) and 218–222 (DGMAE). K232 is modified (N6-(pyridoxal phosphate)lysine).

It belongs to the class-III pyridoxal-phosphate-dependent aminotransferase family. As to quaternary structure, homodimer. The cofactor is pyridoxal 5'-phosphate.

It localises to the cytoplasm. It carries out the reaction N-succinyl-(2S,6S)-2,6-diaminopimelate + 2-oxoglutarate = (S)-2-succinylamino-6-oxoheptanedioate + L-glutamate. It participates in amino-acid biosynthesis; L-lysine biosynthesis via DAP pathway; LL-2,6-diaminopimelate from (S)-tetrahydrodipicolinate (succinylase route): step 2/3. Involved in the lysine biosynthetic pathways. It catalyzes the transfer of an amino group from L-glutamate to N-succinyl-2-l-amino-6-oxoheptanedioate (N-succinyl-2-l-amino-6-ketopimelate) in a PLP-dependent reaction, yielding as products N-succinyl-l-2,6-diaminoheptanedioate (N-succinyl-diaminopimelate) and 2-oxoglutarate. This Mycobacterium tuberculosis (strain CDC 1551 / Oshkosh) protein is Probable N-succinyldiaminopimelate aminotransferase DapC (dapC).